Consider the following 429-residue polypeptide: Glycogenin-1 (429 aa).

Positions 8, 10, 11, 14, and 76 each coordinate UDP. The UDP-alpha-D-glucose site is built by leucine 8, threonine 10, asparagine 11, tyrosine 14, arginine 76, lysine 85, aspartate 101, alanine 102, aspartate 103, asparagine 132, serine 133, aspartate 159, aspartate 162, and glutamine 163. Residues aspartate 101, alanine 102, and aspartate 103 each coordinate UDP. Position 101 (aspartate 101) interacts with Mn(2+). Aspartate 103 serves as a coordination point for Mn(2+). A glycan (O-linked (Glc...) tyrosine) is linked at tyrosine 194. Residues histidine 211, glycine 214, and lysine 217 each contribute to the UDP site. Histidine 211 is a Mn(2+) binding site. Residues glycine 214 and lysine 217 each contribute to the UDP-alpha-D-glucose site. Disordered regions lie at residues 254 to 274 (VFPS…HPKI) and 300 to 338 (SYDT…QTPH). Composition is skewed to basic and acidic residues over residues 263–274 (EHRSHSADHPKI) and 309–338 (DSHR…QTPH).

The protein belongs to the glycosyltransferase 8 family. Glycogenin subfamily. In terms of assembly, forms a heterooctamer with one molecule of gyg-1 bound to each protomer of the gys-1 homotetramer. The N-terminus of gys-1 is involved in interprotomer contacts with gyg-1. The interaction with gys-1 is required for glycogen production but is not required for gys-1 intrinsic activity. Mn(2+) is required as a cofactor. In terms of processing, self-glycosylated by the transfer of glucose residues from UDP-glucose to itself, forming an alpha-1,4-glycan of around 10 residues attached to Tyr-194.

Its subcellular location is the cytoplasm. It is found in the nucleus. The enzyme catalyses L-tyrosyl-[glycogenin] + UDP-alpha-D-glucose = alpha-D-glucosyl-L-tyrosyl-[glycogenin] + UDP + H(+). It carries out the reaction [1,4-alpha-D-glucosyl](n)-L-tyrosyl-[glycogenin] + UDP-alpha-D-glucose = [1,4-alpha-D-glucosyl](n+1)-L-tyrosyl-[glycogenin] + UDP + H(+). The protein operates within glycan biosynthesis; glycogen biosynthesis. Its function is as follows. Self-glucosylating initiator of glycogen synthesis. It catalyzes the formation of a short alpha (1,4)-glucosyl chain covalently attached via a glucose 1-O-tyrosyl linkage to internal tyrosine residues and these chains act as primers for the elongation reaction catalyzed by glycogen synthase. The sequence is that of Glycogenin-1 from Caenorhabditis elegans.